Reading from the N-terminus, the 193-residue chain is Shikimate kinase (193 aa).

31–36 (GVGKTT) provides a ligand contact to ATP. Thr-35 serves as a coordination point for Mg(2+). Asp-53, Arg-77, and Gly-103 together coordinate substrate. ATP is bound at residue Arg-141. Arg-160 serves as a coordination point for substrate. Gln-176 is a binding site for ATP.

The protein belongs to the shikimate kinase family. In terms of assembly, monomer. The cofactor is Mg(2+).

The protein localises to the cytoplasm. It carries out the reaction shikimate + ATP = 3-phosphoshikimate + ADP + H(+). Its pathway is metabolic intermediate biosynthesis; chorismate biosynthesis; chorismate from D-erythrose 4-phosphate and phosphoenolpyruvate: step 5/7. In terms of biological role, catalyzes the specific phosphorylation of the 3-hydroxyl group of shikimic acid using ATP as a cosubstrate. This Novosphingobium aromaticivorans (strain ATCC 700278 / DSM 12444 / CCUG 56034 / CIP 105152 / NBRC 16084 / F199) protein is Shikimate kinase.